Here is a 493-residue protein sequence, read N- to C-terminus: Serine/threonine-protein kinase chk-1 (493 aa).

The region spanning 26–286 (YRVIRTLGEG…IEQIKTDPWF (261 aa)) is the Protein kinase domain. ATP is bound by residues 32-40 (LGEGAFGEV) and Lys56. Residue Asp150 is the Proton acceptor of the active site. The interval 308-348 (DENSPDCNISSTQQADAVSTAKRRHLETPDKVAHVERQNAS) is disordered. The span at 312-324 (PDCNISSTQQADA) shows a compositional bias: polar residues. Over residues 333–344 (LETPDKVAHVER) the composition is skewed to basic and acidic residues.

The protein belongs to the protein kinase superfamily. CAMK Ser/Thr protein kinase family. NIM1 subfamily.

Its subcellular location is the cytoplasm. The protein resides in the nucleus. The enzyme catalyses L-seryl-[protein] + ATP = O-phospho-L-seryl-[protein] + ADP + H(+). It catalyses the reaction L-threonyl-[protein] + ATP = O-phospho-L-threonyl-[protein] + ADP + H(+). Serine/threonine-protein kinase which is required for checkpoint-mediated cell cycle arrest and activation of DNA repair in response to the presence of DNA damage or unreplicated DNA. May also negatively regulate cell cycle progression during unperturbed cell cycles. Required for checkpoint mediated cell cycle arrest in response to DNA damage in germline cells. Essential for embryogenesis. The protein is Serine/threonine-protein kinase chk-1 (chk-1) of Caenorhabditis briggsae.